Consider the following 448-residue polypeptide: Serine--tRNA ligase (448 aa).

Position 255–257 (255–257 (TSE)) interacts with L-serine. 286–288 (RSE) serves as a coordination point for ATP. Glu-309 contacts L-serine. Residue 373–376 (EISS) participates in ATP binding. L-serine is bound at residue Ser-408.

This sequence belongs to the class-II aminoacyl-tRNA synthetase family. Type-1 seryl-tRNA synthetase subfamily. As to quaternary structure, homodimer. The tRNA molecule binds across the dimer.

Its subcellular location is the cytoplasm. It carries out the reaction tRNA(Ser) + L-serine + ATP = L-seryl-tRNA(Ser) + AMP + diphosphate + H(+). It catalyses the reaction tRNA(Sec) + L-serine + ATP = L-seryl-tRNA(Sec) + AMP + diphosphate + H(+). It participates in aminoacyl-tRNA biosynthesis; selenocysteinyl-tRNA(Sec) biosynthesis; L-seryl-tRNA(Sec) from L-serine and tRNA(Sec): step 1/1. In terms of biological role, catalyzes the attachment of serine to tRNA(Ser). Is also able to aminoacylate tRNA(Sec) with serine, to form the misacylated tRNA L-seryl-tRNA(Sec), which will be further converted into selenocysteinyl-tRNA(Sec). In Bordetella petrii (strain ATCC BAA-461 / DSM 12804 / CCUG 43448), this protein is Serine--tRNA ligase.